We begin with the raw amino-acid sequence, 585 residues long: Probable long-chain-fatty-acid--AMP ligase FadD30 (585 aa).

This sequence belongs to the ATP-dependent AMP-binding enzyme family.

It participates in lipid metabolism; fatty acid biosynthesis. Functionally, catalyzes the activation of long-chain fatty acids as acyl-adenylates (acyl-AMP), which are then transferred to a multifunctional polyketide synthase (PKS) for further chain extension. This Mycobacterium tuberculosis (strain CDC 1551 / Oshkosh) protein is Probable long-chain-fatty-acid--AMP ligase FadD30 (fadD30).